We begin with the raw amino-acid sequence, 415 residues long: Serine hydroxymethyltransferase 3 (415 aa).

Residues L122 and 126–128 (GHL) each bind (6S)-5,6,7,8-tetrahydrofolate. K230 bears the N6-(pyridoxal phosphate)lysine mark.

The protein belongs to the SHMT family. In terms of assembly, homodimer. The cofactor is pyridoxal 5'-phosphate.

The protein localises to the cytoplasm. It carries out the reaction (6R)-5,10-methylene-5,6,7,8-tetrahydrofolate + glycine + H2O = (6S)-5,6,7,8-tetrahydrofolate + L-serine. The protein operates within one-carbon metabolism; tetrahydrofolate interconversion. It participates in amino-acid biosynthesis; glycine biosynthesis; glycine from L-serine: step 1/1. Functionally, catalyzes the reversible interconversion of serine and glycine with tetrahydrofolate (THF) serving as the one-carbon carrier. This reaction serves as the major source of one-carbon groups required for the biosynthesis of purines, thymidylate, methionine, and other important biomolecules. Also exhibits THF-independent aldolase activity toward beta-hydroxyamino acids, producing glycine and aldehydes, via a retro-aldol mechanism. The polypeptide is Serine hydroxymethyltransferase 3 (Burkholderia lata (strain ATCC 17760 / DSM 23089 / LMG 22485 / NCIMB 9086 / R18194 / 383)).